The sequence spans 120 residues: Chaperonin GroEL (120 aa).

23–27 (DGTTT) is a binding site for ATP.

It belongs to the chaperonin (HSP60) family. In terms of assembly, forms a cylinder of 14 subunits composed of two heptameric rings stacked back-to-back. Interacts with the co-chaperonin GroES.

The protein localises to the cytoplasm. It carries out the reaction ATP + H2O + a folded polypeptide = ADP + phosphate + an unfolded polypeptide.. Together with its co-chaperonin GroES, plays an essential role in assisting protein folding. The GroEL-GroES system forms a nano-cage that allows encapsulation of the non-native substrate proteins and provides a physical environment optimized to promote and accelerate protein folding. The sequence is that of Chaperonin GroEL from Mycobacterium xenopi.